The chain runs to 231 residues: MRSVLYLLFTAVAAVAALENPFLVPPGGYQFNTREPTVLNWQPTTPGTVTLKLQMSSDITPHSGLVLAAHLENTGTFTFLPPPDLMQNGLYTVQIIDDNDPSKYNFTPSFMVDGATGGPTTGPTTSRTSMTTSEATTTSGESTTSPSSTRPSTVSPTTTDSSDTTMSTVTSSSTPTTTDSTTTSESTAVSSTRSSSTGMPTSSGAPDPNGAVSLALPGGLLSIVLSLMALL.

An N-terminal signal peptide occupies residues 1 to 17; sequence MRSVLYLLFTAVAAVAA. Residues 107-206 form a disordered region; sequence TPSFMVDGAT…TGMPTSSGAP (100 aa). Over residues 121-204 the composition is skewed to low complexity; that stretch reads TGPTTSRTSM…SSTGMPTSSG (84 aa). Ser203 carries GPI-anchor amidated serine lipidation. Positions 204–231 are cleaved as a propeptide — removed in mature form; it reads GAPDPNGAVSLALPGGLLSIVLSLMALL.

Belongs to the SRP1/TIP1 family. The GPI-anchor is attached to the protein in the endoplasmic reticulum and serves to target the protein to the cell surface. There, the glucosamine-inositol phospholipid moiety is cleaved off and the GPI-modified mannoprotein is covalently attached via its lipidless GPI glycan remnant to the 1,6-beta-glucan of the outer cell wall layer.

It localises to the cell membrane. It is found in the secreted. The protein localises to the cell wall. Functionally, probable component of the cell wall. In Arthroderma benhamiae (strain ATCC MYA-4681 / CBS 112371) (Trichophyton mentagrophytes), this protein is Probable cell wall protein ARB_06477.